Consider the following 461-residue polypeptide: Photosystem II CP43 reaction center protein (461 aa).

5 helical membrane-spanning segments follow: residues 57-81 (LFEV…SHLA), 122-143 (LRGP…KDKN), 166-188 (KAMF…RIIS), 243-263 (KPFG…LSYS), and 279-300 (WYNN…ASQS). Position 355 (Glu-355) interacts with [CaMn4O5] cluster. The helical transmembrane segment at 435-459 (RARAAAAGFEKGIDRATEPVLAMRD) threads the bilayer.

It belongs to the PsbB/PsbC family. PsbC subfamily. As to quaternary structure, PSII is composed of 1 copy each of membrane proteins PsbA, PsbB, PsbC, PsbD, PsbE, PsbF, PsbH, PsbI, PsbJ, PsbK, PsbL, PsbM, PsbT, PsbX, PsbY, PsbZ, Psb30/Ycf12, peripheral proteins PsbO, CyanoQ (PsbQ), PsbU, PsbV and a large number of cofactors. It forms dimeric complexes. The cofactor is Binds multiple chlorophylls and provides some of the ligands for the Ca-4Mn-5O cluster of the oxygen-evolving complex. It may also provide a ligand for a Cl- that is required for oxygen evolution. PSII binds additional chlorophylls, carotenoids and specific lipids..

The protein localises to the cellular thylakoid membrane. Functionally, one of the components of the core complex of photosystem II (PSII). It binds chlorophyll and helps catalyze the primary light-induced photochemical processes of PSII. PSII is a light-driven water:plastoquinone oxidoreductase, using light energy to abstract electrons from H(2)O, generating O(2) and a proton gradient subsequently used for ATP formation. The chain is Photosystem II CP43 reaction center protein from Synechococcus elongatus (strain ATCC 33912 / PCC 7942 / FACHB-805) (Anacystis nidulans R2).